Reading from the N-terminus, the 351-residue chain is Protein-glutamate methylesterase/protein-glutamine glutaminase 2 (351 aa).

Residues 4–121 (KVLVVDDSAL…PQDFNEYQDL (118 aa)) enclose the Response regulatory domain. At aspartate 55 the chain carries 4-aspartylphosphate. The CheB-type methylesterase domain maps to 156–348 (RVINTQLVAI…DKMLNYLASL (193 aa)). Catalysis depends on residues serine 168, histidine 194, and aspartate 290.

It belongs to the CheB family. Phosphorylated by CheA. Phosphorylation of the N-terminal regulatory domain activates the methylesterase activity.

The protein resides in the cytoplasm. The catalysed reaction is [protein]-L-glutamate 5-O-methyl ester + H2O = L-glutamyl-[protein] + methanol + H(+). It carries out the reaction L-glutaminyl-[protein] + H2O = L-glutamyl-[protein] + NH4(+). Involved in chemotaxis. Part of a chemotaxis signal transduction system that modulates chemotaxis in response to various stimuli. Catalyzes the demethylation of specific methylglutamate residues introduced into the chemoreceptors (methyl-accepting chemotaxis proteins or MCP) by CheR. Also mediates the irreversible deamidation of specific glutamine residues to glutamic acid. The protein is Protein-glutamate methylesterase/protein-glutamine glutaminase 2 of Shewanella sp. (strain MR-7).